The following is a 394-amino-acid chain: Argininosuccinate synthase (394 aa).

8-16 (AYSGGLDTS) lines the ATP pocket. L-citrulline is bound by residues Tyr86 and Ser91. ATP is bound at residue Gly116. L-aspartate-binding residues include Thr118, Asn122, and Asp123. Asn122 contacts L-citrulline. Positions 126, 172, 181, 256, and 268 each coordinate L-citrulline.

The protein belongs to the argininosuccinate synthase family. Type 1 subfamily. In terms of assembly, homotetramer.

Its subcellular location is the cytoplasm. The enzyme catalyses L-citrulline + L-aspartate + ATP = 2-(N(omega)-L-arginino)succinate + AMP + diphosphate + H(+). It participates in amino-acid biosynthesis; L-arginine biosynthesis; L-arginine from L-ornithine and carbamoyl phosphate: step 2/3. The polypeptide is Argininosuccinate synthase (Methanococcoides burtonii (strain DSM 6242 / NBRC 107633 / OCM 468 / ACE-M)).